A 916-amino-acid polypeptide reads, in one-letter code: MNRSQVEYQSEIVPDPLEQQIPEQLFEGLQVAENAVALTADTFSPDVFGALVSRFLTVFTDESNTPQGYYPIWDGYETNNLGNPGVFSGFINSILVAGTGNPNFHSDITDLLGDTGPGISSEHGYLLPGYGTRITRRQPIPLDMLEHARGTLVEARTSYGQDGRGPTYQSGNQSYVSALRSMFTGDVASSLIADERGGGHISGALANGLFNVAPVVYKTSEIGDTDTFKRRVSNAPSIGDIKLVINGQSGPDLKSEKDRIYQIPDDDRYVTKITSHCDLDDRKLIVEKVKLNVPRRIKISAHAKADYNTIVADSLRTALVAAFNGKVYDCLQLRSSEDHGPGVVIENMPLHEYPHKSMTLSGETTITAKARDEFVNVKFDTKSTSGTISIPITKMKFVFAGIMKYDPKSATYTYSATNVVTNIFDGDVGVARLRRSPIRVNKRSYDYNDDRNFRPESLKAEISMPYDRRNSGAVIHGLHNVLERYDLERKLETHDPWTGLPFSNSIMSPPGEDDNLLRYSGIEYDDIHAIYTSPSTFNGTILGLTSPSGKEIVERVADMCLHMLLSQHEVDLYGRDIIASTKLSDPKLSQAIKLIKARLQREIYDKSAITSMHDKLWFTNVNESVAPDDRIVVDIMLARYLLSLTHHIVYPISEDTYRSTLLLPPRINKAKYIPVSLSEEGYRVVTPTLSVVYSYFMKEPGSRQLLKQYISKDGNFKQDPQNKLDWLSAINRYEPRNFKELVNNSTQGRIELHAIVRAPLVEVTYESVLDGTYTHCIICDNCKIITLDYLIQSTVYQLCTKSESMDGVQSVLSKVHNNGGKLFVIYDKWFILLFVIPEKTDVPPIVFVQTSTRAARIVPHTKNTNSSLRRADAKYDYEVLMQSAVSCDLLYMSKTIEWSSGRRVGQLLRDRSVKYA.

This is an uncharacterized protein from Micromonas pusilla reovirus (isolate Netherlands/2005) (MpRV).